The primary structure comprises 126 residues: Aspartate 1-decarboxylase 1 (126 aa).

The active-site Schiff-base intermediate with substrate; via pyruvic acid is Ser25. Pyruvic acid (Ser) is present on Ser25. Thr57 is a substrate binding site. Residue Tyr58 is the Proton donor of the active site. A substrate-binding site is contributed by 73–75; the sequence is GSA.

The protein belongs to the PanD family. As to quaternary structure, heterooctamer of four alpha and four beta subunits. Requires pyruvate as cofactor. Is synthesized initially as an inactive proenzyme, which is activated by self-cleavage at a specific serine bond to produce a beta-subunit with a hydroxyl group at its C-terminus and an alpha-subunit with a pyruvoyl group at its N-terminus.

It localises to the cytoplasm. The enzyme catalyses L-aspartate + H(+) = beta-alanine + CO2. It functions in the pathway cofactor biosynthesis; (R)-pantothenate biosynthesis; beta-alanine from L-aspartate: step 1/1. Its function is as follows. Catalyzes the pyruvoyl-dependent decarboxylation of aspartate to produce beta-alanine. This Polaromonas sp. (strain JS666 / ATCC BAA-500) protein is Aspartate 1-decarboxylase 1.